A 310-amino-acid chain; its full sequence is p-hydroxybenzoic acid efflux pump subunit AaeA (310 aa).

The chain crosses the membrane as a helical span at residues 12 to 32; the sequence is AITLVLVILAFIAIFRAWVYY.

Belongs to the membrane fusion protein (MFP) (TC 8.A.1) family.

The protein localises to the cell inner membrane. Forms an efflux pump with AaeB. This is p-hydroxybenzoic acid efflux pump subunit AaeA from Escherichia fergusonii (strain ATCC 35469 / DSM 13698 / CCUG 18766 / IAM 14443 / JCM 21226 / LMG 7866 / NBRC 102419 / NCTC 12128 / CDC 0568-73).